A 270-amino-acid chain; its full sequence is Putative [LysW]-aminoadipate/[LysW]-glutamate kinase (270 aa).

Substrate contacts are provided by residues 42–43 (GG), Arg69, and Asn177.

Belongs to the acetylglutamate kinase family. LysZ subfamily.

It is found in the cytoplasm. It carries out the reaction [amino-group carrier protein]-C-terminal-N-(1,4-dicarboxybutan-1-yl)-L-glutamine + ATP = [amino-group carrier protein]-C-terminal-N-(1-carboxy-5-phosphooxy-5-oxopentan-1-yl)-L-glutamine + ADP. It catalyses the reaction [amino-group carrier protein]-C-terminal-gamma-(L-glutamyl)-L-glutamate + ATP = [amino-group carrier protein]-C-terminal-gamma-(5-phospho-L-glutamyl)-L-glutamate + ADP. The protein operates within amino-acid biosynthesis; L-lysine biosynthesis via AAA pathway; L-lysine from L-alpha-aminoadipate (Thermus route): step 2/5. It participates in amino-acid biosynthesis; L-arginine biosynthesis. Functionally, involved in both the arginine and lysine biosynthetic pathways. Phosphorylates the LysW-bound precursors glutamate (for arginine biosynthesis), respectively alpha-aminoadipate (for lysine biosynthesis). This is Putative [LysW]-aminoadipate/[LysW]-glutamate kinase from Aeropyrum pernix (strain ATCC 700893 / DSM 11879 / JCM 9820 / NBRC 100138 / K1).